The sequence spans 463 residues: Oxidoreductase OXR1 (463 aa).

6-hydroxy-FAD-binding positions include 59-63 (GGSYS), V154, and D366.

Belongs to the FAD-dependent oxidoreductase family. 6-hydroxy-FAD is required as a cofactor.

Its pathway is siderophore biosynthesis. Oxidoreductase; part of the gene cluster that mediates the biosynthesis of hydroxamate-containing siderophores that play a critical role in virulence via intracellular iron acquisition during macrophage infection. The chain is Oxidoreductase OXR1 from Ajellomyces capsulatus (Darling's disease fungus).